We begin with the raw amino-acid sequence, 1033 residues long: Lethal(2) giant larvae protein homolog SRO7 (1033 aa).

Positions 16–45 (SLKGQNSETPIENSKASFKSKNSKTSTISK) are disordered. The span at 18–27 (KGQNSETPIE) shows a compositional bias: polar residues. Positions 28 to 45 (NSKASFKSKNSKTSTISK) are enriched in low complexity. WD repeat units lie at residues 81 to 114 (IAAA…VVIK), 121 to 156 (IKEM…TTVF), 161 to 197 (ITSI…SFKL), 216 to 249 (SIQW…KQSF), 274 to 309 (VIQS…IMAR), 333 to 397 (KISK…MKIF), 405 to 440 (IVNI…ETML), 464 to 538 (ATTS…FEVN), 552 to 631 (DKIS…STAV), 638 to 673 (TSAI…YMEN), 685 to 736 (VTCI…DITN), 745 to 799 (KIDA…THKG), 804 to 851 (LAAT…MSEH), and 865 to 888 (SVLR…STVK). Ser-591 and Ser-602 each carry phosphoserine. Residues 953–984 (SFSERSSDDNNANHPEHQYTKPTRKGRNSSYG) form a disordered region.

This sequence belongs to the WD repeat L(2)GL family. Interacts with MYO2 and SEC9.

The protein localises to the cytoplasm. The protein resides in the cell membrane. Its function is as follows. Acts as an allosteric regulator of polarized exocytosis by promoting the targeted fusion of vesicles with the plasma membrane. Coordinates the spatial and temporal nature of both Rab-dependent tethering and SNARE-dependent membrane fusion of exocytic vesicles with the plasma membrane. Required for targeting of the sodium pumping ATPase ENA1 to the Cell Surface, thus being involved in maintenance of ion homeostasis in cells exposed to NaCl stress. May be involved in the targeting of the myosin proteins to their intrinsic pathways. Multicopy suppressor of RHO3. May also participate in the maintenance of cell polarity and bud growth. This chain is Lethal(2) giant larvae protein homolog SRO7 (SRO7), found in Saccharomyces cerevisiae (strain ATCC 204508 / S288c) (Baker's yeast).